Reading from the N-terminus, the 113-residue chain is U11-theraphotoxin-Hhn1k (113 aa).

The signal sequence occupies residues 1–21; the sequence is MNTVRVTFLLVFVLAVSLGQA. Positions 22 to 74 are excised as a propeptide; sequence DKDENRMEMQEKTEQGKSYLDFAENLLLQKLEELEAKLLEEDSEESRNSRQKR. Residues 61–83 form a disordered region; the sequence is EEDSEESRNSRQKRCIGEGVPCD. Intrachain disulfides connect Cys-75-Cys-90, Cys-82-Cys-95, and Cys-89-Cys-110.

This sequence belongs to the neurotoxin 14 (magi-1) family. 01 (HNTX-16) subfamily. In terms of tissue distribution, expressed by the venom gland.

The protein localises to the secreted. In terms of biological role, probable ion channel inhibitor. In Cyriopagopus hainanus (Chinese bird spider), this protein is U11-theraphotoxin-Hhn1k.